The primary structure comprises 548 residues: Probable zinc metalloprotease EGY1, chloroplastic (548 aa).

The transit peptide at Met1–Arg18 directs the protein to the chloroplast. Residues Asn61 to Lys76 show a composition bias toward basic and acidic residues. The interval Asn61 to Ile116 is disordered. A compositionally biased stretch (polar residues) spans Asn103–Ile116. The next 8 helical transmembrane spans lie at Tyr242 to Ala262, Leu290 to Phe310, Leu326 to Phe346, Leu361 to Leu381, Ala388 to Ile408, Ala416 to Leu436, Met474 to Ile494, and Ala516 to Leu536.

Belongs to the peptidase M50B family. As to expression, expressed in roots, leaves, cotyledons, hypocotyls, stems, flowers and siliques.

The protein localises to the plastid. Its subcellular location is the chloroplast membrane. In terms of biological role, membrane-associated and ATP-independent metalloprotease required for development of both thylakoid grana and well-organized lamellae in chloroplast. Required for the accumulation of chlorophyll and chlorophyll a/b binding (CAB) proteins (from both PS I and PS II) in chloroplast membranes, and for grana formation and normal chloroplast development. Involved in the regulation of nuclear gene expression in response to ammonium stress and interacts with ABA signaling. Carries out beta-casein degradation in an ATP-independent manner in vitro. The chain is Probable zinc metalloprotease EGY1, chloroplastic (EGY1) from Arabidopsis thaliana (Mouse-ear cress).